Here is a 147-residue protein sequence, read N- to C-terminus: Hemoglobin subunit beta (147 aa).

The Globin domain occupies 2–147; sequence DWTDAERAAI…VVSALGRQYH (146 aa). His-63 and His-92 together coordinate heme b.

It belongs to the globin family. As to quaternary structure, heterotetramer of two alpha chains and two beta chains. In terms of tissue distribution, red blood cells.

In terms of biological role, involved in oxygen transport from gills to the various peripheral tissues. In Leiostomus xanthurus (Spot), this protein is Hemoglobin subunit beta (hbb).